Consider the following 855-residue polypeptide: DNA mismatch repair protein MutS (855 aa).

G613 to S620 provides a ligand contact to ATP. Residues T796 to Q816 are disordered.

It belongs to the DNA mismatch repair MutS family.

In terms of biological role, this protein is involved in the repair of mismatches in DNA. It is possible that it carries out the mismatch recognition step. This protein has a weak ATPase activity. The protein is DNA mismatch repair protein MutS of Pseudomonas aeruginosa (strain ATCC 15692 / DSM 22644 / CIP 104116 / JCM 14847 / LMG 12228 / 1C / PRS 101 / PAO1).